The sequence spans 73 residues: Antimicrobial peptide 143 (73 aa).

The N-terminal stretch at 1-22 is a signal peptide; the sequence is MKVKCLLAVFLIVLIAAEHCQA. Lysine amide is present on Lys38. A propeptide spanning residues 44-73 is cleaved from the precursor; the sequence is ELGTQFRPQQKNFMRREIDLERLFAEMPDY.

Belongs to the non-disulfide-bridged peptide (NDBP) superfamily. Short antimicrobial peptide (group 4) family. Expressed by the venom gland.

It is found in the secreted. The protein resides in the target cell membrane. Cationic host defense peptide that have antibacterial activity by breaking membranes. Is more effective on Gram-positive than on Gram-negative bacteria. The polypeptide is Antimicrobial peptide 143 (Lychas mucronatus (Chinese swimming scorpion)).